Here is a 266-residue protein sequence, read N- to C-terminus: Tryptophan synthase alpha chain (266 aa).

Active-site proton acceptor residues include glutamate 51 and aspartate 62.

Belongs to the TrpA family. As to quaternary structure, tetramer of two alpha and two beta chains.

It carries out the reaction (1S,2R)-1-C-(indol-3-yl)glycerol 3-phosphate + L-serine = D-glyceraldehyde 3-phosphate + L-tryptophan + H2O. The protein operates within amino-acid biosynthesis; L-tryptophan biosynthesis; L-tryptophan from chorismate: step 5/5. In terms of biological role, the alpha subunit is responsible for the aldol cleavage of indoleglycerol phosphate to indole and glyceraldehyde 3-phosphate. The sequence is that of Tryptophan synthase alpha chain from Thermosynechococcus vestitus (strain NIES-2133 / IAM M-273 / BP-1).